A 454-amino-acid polypeptide reads, in one-letter code: Glutamine synthetase (454 aa).

In terms of domain architecture, GS beta-grasp spans 19–111 (NNVKFIRFQF…VICDVYKDEK (93 aa)). The region spanning 118–454 (PRSRLKAILE…DWETGKYLIY (337 aa)) is the GS catalytic domain. Residues glutamate 142 and glutamate 144 each coordinate Mg(2+). Glutamate 194 contacts ATP. Mg(2+) is bound by residues glutamate 199 and glutamate 206. L-glutamate contacts are provided by residues 250–251 (NG) and glycine 251. Histidine 255 lines the Mg(2+) pocket. Residues 257-259 (HQS) and serine 259 each bind ATP. Residues arginine 309, glutamate 315, and arginine 327 each contribute to the L-glutamate site. ATP contacts are provided by arginine 327, arginine 332, and lysine 339. Glutamate 344 contributes to the Mg(2+) binding site. Arginine 346 provides a ligand contact to L-glutamate.

The protein belongs to the glutamine synthetase family. As to quaternary structure, oligomer of 12 subunits arranged in the form of two hexagons. Requires Mg(2+) as cofactor.

The protein resides in the cytoplasm. The catalysed reaction is L-glutamate + NH4(+) + ATP = L-glutamine + ADP + phosphate + H(+). Its activity is regulated as follows. Feedback inhibited by glycine and alanine, and inhibited by low concentrations of methionine sulfoximine. Probably involved in nitrogen metabolism via ammonium assimilation. Catalyzes the ATP-dependent biosynthesis of glutamine from glutamate and ammonia. Beta-glutamate is a much poorer substrate than alpha-glutamate. In Methanocaldococcus jannaschii (strain ATCC 43067 / DSM 2661 / JAL-1 / JCM 10045 / NBRC 100440) (Methanococcus jannaschii), this protein is Glutamine synthetase.